A 217-amino-acid polypeptide reads, in one-letter code: UPF0502 protein VFMJ11_A0613 (217 aa).

The protein belongs to the UPF0502 family.

This chain is UPF0502 protein VFMJ11_A0613, found in Aliivibrio fischeri (strain MJ11) (Vibrio fischeri).